We begin with the raw amino-acid sequence, 612 residues long: Sulfite reductase [NADPH] hemoprotein beta-component (612 aa).

Residues M1–E26 are disordered. Positions 469, 475, 514, and 518 each coordinate [4Fe-4S] cluster. A siroheme-binding site is contributed by C518.

This sequence belongs to the nitrite and sulfite reductase 4Fe-4S domain family. As to quaternary structure, alpha(8)-beta(8). The alpha component is a flavoprotein, the beta component is a hemoprotein. It depends on siroheme as a cofactor. [4Fe-4S] cluster is required as a cofactor.

The enzyme catalyses hydrogen sulfide + 3 NADP(+) + 3 H2O = sulfite + 3 NADPH + 4 H(+). The protein operates within sulfur metabolism; hydrogen sulfide biosynthesis; hydrogen sulfide from sulfite (NADPH route): step 1/1. Functionally, component of the sulfite reductase complex that catalyzes the 6-electron reduction of sulfite to sulfide. This is one of several activities required for the biosynthesis of L-cysteine from sulfate. The chain is Sulfite reductase [NADPH] hemoprotein beta-component from Methylorubrum extorquens (strain CM4 / NCIMB 13688) (Methylobacterium extorquens).